A 679-amino-acid polypeptide reads, in one-letter code: Protein hook (679 aa).

Residues 5 to 123 (NGMYYSLLEW…RLLQLVLGCA (119 aa)) enclose the Calponin-homology (CH) domain. Residues 140-627 (EEELQANIMR…SKTKMSTMEE (488 aa)) adopt a coiled-coil conformation.

This sequence belongs to the hook family. In terms of assembly, homodimer. Interacts with microtubules via its N-terminus.

It is found in the cytoplasm. The protein resides in the cytoskeleton. It localises to the endosome. The protein localises to the synapse. In terms of biological role, involved in endocytic trafficking by stabilizing organelles of the endocytic pathway. Probably acts as a cytoskeletal linker protein required to tether endosome vesicles to the cytoskeleton. Involved in modulation of endocytosis at stages required for down-regulation of membrane proteins that control synapse size. Not involved in synaptic vesicle recycling. Required in R7 cells for boss endocytosis into multivesicular bodies (MVBs). Has a role in regulating adult longevity. This Drosophila mojavensis (Fruit fly) protein is Protein hook.